A 322-amino-acid polypeptide reads, in one-letter code: UDP-N-acetylenolpyruvoylglucosamine reductase (322 aa).

An FAD-binding PCMH-type domain is found at 36 to 202 (RAGGPAQVLF…TSVLFEGVPG (167 aa)). Arginine 182 is an active-site residue. Serine 231 functions as the Proton donor in the catalytic mechanism. Residue glutamate 301 is part of the active site.

Belongs to the MurB family. The cofactor is FAD.

It is found in the cytoplasm. The catalysed reaction is UDP-N-acetyl-alpha-D-muramate + NADP(+) = UDP-N-acetyl-3-O-(1-carboxyvinyl)-alpha-D-glucosamine + NADPH + H(+). It functions in the pathway cell wall biogenesis; peptidoglycan biosynthesis. Cell wall formation. The chain is UDP-N-acetylenolpyruvoylglucosamine reductase from Brucella suis (strain ATCC 23445 / NCTC 10510).